The chain runs to 307 residues: Elongation factor Ts (307 aa).

Residues 80 to 83 are involved in Mg(2+) ion dislocation from EF-Tu; the sequence is TDFV.

Belongs to the EF-Ts family.

Its subcellular location is the cytoplasm. In terms of biological role, associates with the EF-Tu.GDP complex and induces the exchange of GDP to GTP. It remains bound to the aminoacyl-tRNA.EF-Tu.GTP complex up to the GTP hydrolysis stage on the ribosome. This is Elongation factor Ts (tsf) from Zymomonas mobilis subsp. mobilis (strain ATCC 31821 / ZM4 / CP4).